We begin with the raw amino-acid sequence, 236 residues long: Pyridoxine 5'-phosphate synthase (236 aa).

A 3-amino-2-oxopropyl phosphate-binding site is contributed by asparagine 6. 1-deoxy-D-xylulose 5-phosphate is bound at residue aspartate 8 to histidine 9. Arginine 17 contacts 3-amino-2-oxopropyl phosphate. Catalysis depends on histidine 42, which acts as the Proton acceptor. 1-deoxy-D-xylulose 5-phosphate contacts are provided by arginine 44 and histidine 49. Glutamate 69 serves as the catalytic Proton acceptor. Threonine 99 is a binding site for 1-deoxy-D-xylulose 5-phosphate. The active-site Proton donor is histidine 192. Residues glycine 193 and glycine 216–histidine 217 each bind 3-amino-2-oxopropyl phosphate.

It belongs to the PNP synthase family. As to quaternary structure, homooctamer; tetramer of dimers.

It localises to the cytoplasm. The enzyme catalyses 3-amino-2-oxopropyl phosphate + 1-deoxy-D-xylulose 5-phosphate = pyridoxine 5'-phosphate + phosphate + 2 H2O + H(+). It participates in cofactor biosynthesis; pyridoxine 5'-phosphate biosynthesis; pyridoxine 5'-phosphate from D-erythrose 4-phosphate: step 5/5. Functionally, catalyzes the complicated ring closure reaction between the two acyclic compounds 1-deoxy-D-xylulose-5-phosphate (DXP) and 3-amino-2-oxopropyl phosphate (1-amino-acetone-3-phosphate or AAP) to form pyridoxine 5'-phosphate (PNP) and inorganic phosphate. The protein is Pyridoxine 5'-phosphate synthase of Aquifex pyrophilus.